We begin with the raw amino-acid sequence, 298 residues long: Acetylglutamate kinase (298 aa).

Substrate is bound by residues 61–62, R83, and N188; that span reads GG.

The protein belongs to the acetylglutamate kinase family. ArgB subfamily.

The protein resides in the cytoplasm. The enzyme catalyses N-acetyl-L-glutamate + ATP = N-acetyl-L-glutamyl 5-phosphate + ADP. Its pathway is amino-acid biosynthesis; L-arginine biosynthesis; N(2)-acetyl-L-ornithine from L-glutamate: step 2/4. Functionally, catalyzes the ATP-dependent phosphorylation of N-acetyl-L-glutamate. The protein is Acetylglutamate kinase of Syntrophobacter fumaroxidans (strain DSM 10017 / MPOB).